Reading from the N-terminus, the 170-residue chain is NADH-quinone oxidoreductase subunit B (170 aa).

[4Fe-4S] cluster contacts are provided by Cys37, Cys38, Cys102, and Cys131.

Belongs to the complex I 20 kDa subunit family. As to quaternary structure, NDH-1 is composed of 14 different subunits. Subunits NuoB, C, D, E, F, and G constitute the peripheral sector of the complex. The cofactor is [4Fe-4S] cluster.

The protein resides in the cell inner membrane. It carries out the reaction a quinone + NADH + 5 H(+)(in) = a quinol + NAD(+) + 4 H(+)(out). In terms of biological role, NDH-1 shuttles electrons from NADH, via FMN and iron-sulfur (Fe-S) centers, to quinones in the respiratory chain. The immediate electron acceptor for the enzyme in this species is believed to be ubiquinone. Couples the redox reaction to proton translocation (for every two electrons transferred, four hydrogen ions are translocated across the cytoplasmic membrane), and thus conserves the redox energy in a proton gradient. The protein is NADH-quinone oxidoreductase subunit B of Geotalea daltonii (strain DSM 22248 / JCM 15807 / FRC-32) (Geobacter daltonii).